Reading from the N-terminus, the 3739-residue chain is Pikromycin polyketide synthase component PikAII (3739 aa).

The Ketosynthase family 3 (KS3) 1 domain occupies 35 to 463; sequence GEPVAIVGMA…GTNAHVVLEE (429 aa). Module stretches follow at residues 38–1517 and 1542–3642; these read VAIV…EFLL and VAIV…GHLL. C208 serves as the catalytic Acyl-thioester intermediate; for beta-ketoacyl synthase 1 activity. Residues H343 and H383 each act as for beta-ketoacyl synthase 1 activity in the active site. Positions 572 to 877 are acyltransferase 1; the sequence is FVFPGQGTQW…ERLVTSLAEA (306 aa). Residue S662 is the Acyl-ester intermediate; for acyltransferase 1 activity of the active site. Positions 1150 to 1343 are C2-type beta-ketoacyl reductase 1; sequence GTVLVTGAEE…VTSVAWSPWE (194 aa). Y1313 (for C2-type beta-ketoacyl reductase 1 and probable racemase activities) is an active-site residue. Residues 1445 to 1520 form the Carrier 1 domain; the sequence is RRMQELVREH…TLAEFLLAEI (76 aa). S1480 is subject to O-(pantetheine 4'-phosphoryl)serine. The Ketosynthase family 3 (KS3) 2 domain maps to 1539 to 1967; that stretch reads DEPVAIVGMA…GTNAHIVLEE (429 aa). The active-site Acyl-thioester intermediate; for beta-ketoacyl synthase 2 activity is the C1712. Catalysis depends on for beta-ketoacyl synthase 2 activity residues H1847 and H1887. The acyltransferase 2 stretch occupies residues 2069-2374; the sequence is FVFPGQGTQW…HRLTTSLAEA (306 aa). S2159 serves as the catalytic Acyl-ester intermediate; for acyltransferase 2 activity. The interval 2428–2553 is N-terminal hotdog fold; it reads HPLLGAAVAL…GVLAARADRT (126 aa). A dehydratase region spans residues 2428–2703; the sequence is HPLLGAAVAL…LTVLPVDPAQ (276 aa). A PKS/mFAS DH domain is found at 2428–2705; that stretch reads HPLLGAAVAL…VLPVDPAQLA (278 aa). H2460 functions as the Proton acceptor; for dehydratase activity in the catalytic mechanism. The interval 2567 to 2705 is C-terminal hotdog fold; it reads AEPVDVDGLY…VLPVDPAQLA (139 aa). D2629 functions as the Proton donor; for dehydratase activity in the catalytic mechanism. Residues 2959–3267 are enoyl reductase; it reads GSLESLTAAP…QARHTGKVVL (309 aa). The active-site For enoyl reductase activity is the Y3005. Residues 3092–3109, 3285–3288, 3309–3312, 3338–3339, K3388, and 3412–3413 each bind NADP(+); these read LLVH…VQLA, TGAL, SRRG, DV, and FS. The segment at 3277–3458 is beta-ketoacyl reductase 2; the sequence is GTVLLTGGTG…LSLGWGLWAE (182 aa). Y3427 functions as the For beta-ketoacyl reductase 2 activity in the catalytic mechanism. Residues 3570-3645 form the Carrier 2 domain; that stretch reads AHLRDLVRTH…ELAGHLLDEL (76 aa). S3605 bears the O-(pantetheine 4'-phosphoryl)serine mark.

As to quaternary structure, homodimer. Pikromycin PKS consists of a combination of multimodular (PikAI and PikAII) and monomodular (PikAIII and PikAIV) polypeptides each coding for a functional synthase subunit which participates in 1 (monomodular) or 2 (multimodular) of the six FAS-like elongation steps required for formation of the polyketide. Module 1, 2, 3, 4, 5, and 6 participating in biosynthesis steps 1, 2, 3, 4, 5, and 6, respectively. The cofactor is pantetheine 4'-phosphate.

The catalysed reaction is 5 (S)-methylmalonyl-CoA + malonyl-CoA + 5 NADPH + 11 H(+) = 10-deoxymethynolide + 6 CO2 + 5 NADP(+) + 6 CoA + 2 H2O. It carries out the reaction 6 (S)-methylmalonyl-CoA + malonyl-CoA + 5 NADPH + 12 H(+) = narbonolide + 7 CO2 + 5 NADP(+) + 7 CoA + 2 H2O. The protein operates within antibiotic biosynthesis. In terms of biological role, involved in the biosynthesis of 12- and 14-membered ring macrolactone antibiotics such as methymycin/neomethymycin and pikromycin/narbomycin, respectively. Component of the pikromycin PKS which catalyzes the biosynthesis of both precursors 10-deoxymethynolide (12-membered ring macrolactone) and narbonolide (14-membered ring macrolactone). Chain elongation through PikAI, PikAII and PikAIII followed by thioesterase catalyzed termination results in the production of 10-deoxymethynolide, while continued elongation through PikAIV, followed by thioesterase (TE) catalyzed cyclization results in the biosynthesis of the narbonolide. The polypeptide is Pikromycin polyketide synthase component PikAII (Streptomyces venezuelae).